We begin with the raw amino-acid sequence, 200 residues long: Recombination protein RecR (200 aa).

The segment at C57 to C72 adopts a C4-type zinc-finger fold. Residues T80 to P175 enclose the Toprim domain.

Belongs to the RecR family.

Its function is as follows. May play a role in DNA repair. It seems to be involved in an RecBC-independent recombinational process of DNA repair. It may act with RecF and RecO. The sequence is that of Recombination protein RecR from Pseudomonas syringae pv. tomato (strain ATCC BAA-871 / DC3000).